Here is a 515-residue protein sequence, read N- to C-terminus: WUSCHEL-related homeobox 12 (515 aa).

2 stretches are compositionally biased toward polar residues: residues 23–32 and 44–57; these read QQQPDMNGNG and TAAT…SLLS. Disordered stretches follow at residues 23–76, 130–156, and 176–195; these read QQQP…WNPR, NKLR…PPST, and LLAA…GSSK. Basic and acidic residues predominate over residues 62–71; sequence EGTRNPEPKP. The homeobox; WUS-type DNA-binding region spans 68–132; the sequence is EPKPRWNPRP…NRKSRTKNKL (65 aa). Basic residues predominate over residues 130–143; the sequence is NKLRAAGHHHHHGR. 2 stretches are compositionally biased toward low complexity: residues 144-156 and 177-195; these read AAAL…PPST and LAAT…GSSK.

The protein belongs to the WUS homeobox family.

The protein localises to the nucleus. Its function is as follows. Transcription factor which may be involved in developmental processes. This is WUSCHEL-related homeobox 12 (WOX12) from Oryza sativa subsp. japonica (Rice).